We begin with the raw amino-acid sequence, 604 residues long: Glutamine--fructose-6-phosphate aminotransferase [isomerizing] (604 aa).

Catalysis depends on Cys2, which acts as the Nucleophile; for GATase activity. In terms of domain architecture, Glutamine amidotransferase type-2 spans 2-218; that stretch reads CGIVGVVGNR…DKELVILTKD (217 aa). SIS domains follow at residues 284–423 and 456–594; these read IITS…ANGK and VQAL…VDKP. Lys599 acts as the For Fru-6P isomerization activity in catalysis.

As to quaternary structure, homodimer.

It is found in the cytoplasm. The enzyme catalyses D-fructose 6-phosphate + L-glutamine = D-glucosamine 6-phosphate + L-glutamate. Functionally, catalyzes the first step in hexosamine metabolism, converting fructose-6P into glucosamine-6P using glutamine as a nitrogen source. This Streptococcus pyogenes serotype M1 protein is Glutamine--fructose-6-phosphate aminotransferase [isomerizing].